A 115-amino-acid polypeptide reads, in one-letter code: DNA-binding protein TV0008 (115 aa).

Positions 18–37 (LQRQAMQRQMAEEEEKQREI) are disordered.

Belongs to the PDCD5 family.

This Thermoplasma volcanium (strain ATCC 51530 / DSM 4299 / JCM 9571 / NBRC 15438 / GSS1) protein is DNA-binding protein TV0008.